A 138-amino-acid polypeptide reads, in one-letter code: Acidic phospholipase A2 Ts-A3 (138 aa).

The signal sequence occupies residues 1–16 (MRTLWIMAVLLLGVEG). Disulfide bonds link Cys-42-Cys-132, Cys-44-Cys-60, Cys-59-Cys-111, Cys-65-Cys-138, Cys-66-Cys-104, Cys-73-Cys-97, and Cys-91-Cys-102. Tyr-43, Gly-45, and Gly-47 together coordinate Ca(2+). His-63 is an active-site residue. Asp-64 is a Ca(2+) binding site. Asp-105 is a catalytic residue.

Ca(2+) serves as cofactor. Expressed by the venom gland.

Its subcellular location is the secreted. The catalysed reaction is a 1,2-diacyl-sn-glycero-3-phosphocholine + H2O = a 1-acyl-sn-glycero-3-phosphocholine + a fatty acid + H(+). Functionally, snake venom phospholipase A2 (PLA2) that shows a moderate inhibition of ADP-induced human platelet aggregation when tested on platelet rich plasma. Exhibits high hydrolytic activities and prefers the anionic micelles (dPPC with deoxycholate) to the zwitterionic micelles (dPPC with Triton X-100). PLA2 catalyzes the calcium-dependent hydrolysis of the 2-acyl groups in 3-sn-phosphoglycerides. This is Acidic phospholipase A2 Ts-A3 from Trimeresurus stejnegeri (Chinese green tree viper).